Consider the following 422-residue polypeptide: Serine hydroxymethyltransferase (422 aa).

(6S)-5,6,7,8-tetrahydrofolate is bound by residues Leu113 and 117–119 (GHL). Lys222 is modified (N6-(pyridoxal phosphate)lysine).

The protein belongs to the SHMT family. Homodimer. Pyridoxal 5'-phosphate serves as cofactor.

The protein localises to the cytoplasm. The catalysed reaction is (6R)-5,10-methylene-5,6,7,8-tetrahydrofolate + glycine + H2O = (6S)-5,6,7,8-tetrahydrofolate + L-serine. It participates in one-carbon metabolism; tetrahydrofolate interconversion. Its pathway is amino-acid biosynthesis; glycine biosynthesis; glycine from L-serine: step 1/1. Catalyzes the reversible interconversion of serine and glycine with tetrahydrofolate (THF) serving as the one-carbon carrier. This reaction serves as the major source of one-carbon groups required for the biosynthesis of purines, thymidylate, methionine, and other important biomolecules. Also exhibits THF-independent aldolase activity toward beta-hydroxyamino acids, producing glycine and aldehydes, via a retro-aldol mechanism. This is Serine hydroxymethyltransferase from Amoebophilus asiaticus (strain 5a2).